Reading from the N-terminus, the 567-residue chain is Interleukin-1 receptor-like 1 (567 aa).

The signal sequence occupies residues 1–26; the sequence is MIDRQRMGLWALAILTLPMYLTVTEG. 2 Ig-like C2-type domains span residues 27-109 and 120-203; these read SKSS…LNVT and PDYL…VTAT. Over 27–332 the chain is Extracellular; it reads SKSSWGLENE…LRRKQPIDHR (306 aa). Cys-42 and Cys-93 are joined by a disulfide. Asn-60, Asn-101, Asn-107, Asn-146, Asn-176, and Asn-194 each carry an N-linked (GlcNAc...) asparagine glycan. 2 disulfides stabilise this stretch: Cys-117–Cys-157 and Cys-139–Cys-187. The interval 204–216 is flexible linker; the sequence is RSFTVEEKGFSMF. The Ig-like C2-type 3 domain occupies 217–324; it reads PVITNPPYNH…GMIRHTIRLR (108 aa). 3 N-linked (GlcNAc...) asparagine glycosylation sites follow: Asn-225, Asn-259, and Asn-278. Intrachain disulfides connect Cys-240–Cys-308 and Cys-243–Cys-287. Lys-326 is covalently cross-linked (Glycyl lysine isopeptide (Lys-Gly) (interchain with G-Cter in ubiquitin)). Residues 333 to 355 traverse the membrane as a helical segment; sequence SIYYIVAGCSLLLMFINVLVIVL. The Cytoplasmic segment spans residues 356–567; that stretch reads KVFWIEVALF…GKACLDLKHF (212 aa). The region spanning 380-540 is the TIR domain; sequence KLYDAYIIYP…KFWKHVRYQM (161 aa). Ser-442 carries the phosphoserine; by GSK3-beta modification. Residue Glu-466 is part of the active site.

Belongs to the interleukin-1 receptor family. Interacts with MYD88, IRAK1, IRAK4, and TRAF6. Bound to its ligand IL33, interacts with IL1RAP to form the minimal interleukin-33 signaling complex with a 1:1:1 stoichiometry. Interacts with KIT (bound to KITLG/SCF). A mast cell-specific KITLG/SCF-induced interleukin-33 signaling complex contains IL1RL1, IL1RAP, KIT and MYD88. Interacts with TMED1. In terms of processing, phosphorylated by GSK3B at Ser-442; leading to proteasomal degradation. Ubiquitinated at Lys-326 in a FBXL19-mediated manner; leading to proteasomal degradation. Ubiquitination by TRAF6 via 'Lys-27'-linked polyubiquitination and deubiquitination by USP38 serves as a critical regulatory mechanism for fine-tuning IL1RL1-mediated inflammatory response. Predominantly expressed in hematopoietic tissues, and in macrophage, erythroid, epithelial and fibroblast cell lines. Isoform A is expressed in brain astrocytes and microglia. Isoform B is expressed in brain endothelial cells.

Its subcellular location is the cell membrane. It localises to the secreted. The catalysed reaction is NAD(+) + H2O = ADP-D-ribose + nicotinamide + H(+). Its function is as follows. Receptor for interleukin-33 (IL-33) which plays crucial roles in innate and adaptive immunity, contributing to tissue homeostasis and responses to environmental stresses together with coreceptor IL1RAP. Its stimulation recruits MYD88, IRAK1, IRAK4, and TRAF6, followed by phosphorylation of MAPK3/ERK1 and/or MAPK1/ERK2, MAPK14, and MAPK8. Possibly involved in helper T-cell function. Upon tissue injury, induces UCP2-dependent mitochondrial rewiring that attenuates the generation of reactive oxygen species and preserves the integrity of Krebs cycle required for persistent production of itaconate and subsequent GATA3-dependent differentiation of inflammation-resolving alternatively activated macrophages. In terms of biological role, inhibits IL-33 signaling. The protein is Interleukin-1 receptor-like 1 (Il1rl1) of Mus musculus (Mouse).